The sequence spans 153 residues: Satratoxin biosynthesis SC2 cluster transcription factor SAT15 (153 aa).

The protein resides in the nucleus. Transcriptional regulator that may regulate the expression of the satratoxin biosynthesis SC2 cluster, one of the 3 clusters involved in the biosynthesis of satratoxins, trichothecene mycotoxins that are associated with human food poisonings. The protein is Satratoxin biosynthesis SC2 cluster transcription factor SAT15 of Stachybotrys chartarum (strain CBS 109288 / IBT 7711) (Toxic black mold).